The chain runs to 381 residues: EPS I polysaccharide export outer membrane protein EpsA (381 aa).

Residues 1–23 (MFVSIPNIRKAVVSLSVVPLLAA) form the signal peptide. Cys24 carries N-palmitoyl cysteine lipidation. Cys24 carries the S-diacylglycerol cysteine lipid modification.

It belongs to the BexD/CtrA/VexA family.

Its subcellular location is the cell outer membrane. Functionally, probably involved in polymerization and/or export of exopolysaccharide EPS I which functions as a virulence factor. This chain is EPS I polysaccharide export outer membrane protein EpsA (epsA), found in Ralstonia nicotianae (strain ATCC BAA-1114 / GMI1000) (Ralstonia solanacearum).